A 699-amino-acid chain; its full sequence is Elongation factor G (699 aa).

Positions 8-283 constitute a tr-type G domain; sequence EHIRNIGICA…AVVDFLPSPI (276 aa). GTP is bound by residues 17–24, 81–85, and 135–138; these read AHIDAGKT, DTPGH, and NKMD.

The protein belongs to the TRAFAC class translation factor GTPase superfamily. Classic translation factor GTPase family. EF-G/EF-2 subfamily.

The protein localises to the cytoplasm. Functionally, catalyzes the GTP-dependent ribosomal translocation step during translation elongation. During this step, the ribosome changes from the pre-translocational (PRE) to the post-translocational (POST) state as the newly formed A-site-bound peptidyl-tRNA and P-site-bound deacylated tRNA move to the P and E sites, respectively. Catalyzes the coordinated movement of the two tRNA molecules, the mRNA and conformational changes in the ribosome. The polypeptide is Elongation factor G (Rickettsia felis (strain ATCC VR-1525 / URRWXCal2) (Rickettsia azadi)).